A 995-amino-acid polypeptide reads, in one-letter code: DExH-box ATP-dependent RNA helicase DExH1 (995 aa).

Disordered regions lie at residues 1–42 and 156–192; these read MPPH…EQRW and KTTQ…ASKL. Positions 25 to 37 are enriched in gly residues; sequence RGGGGRGGGGGGR. Residues 161-170 show a composition bias toward low complexity; the sequence is SGSSGASASA. Residues 171–181 show a composition bias toward polar residues; that stretch reads FNDQQDRTSTL. In terms of domain architecture, Helicase ATP-binding spans 238–405; sequence LNSVSQNQVL…FGNSPTMHIP (168 aa). 251–258 contributes to the ATP binding site; sequence GETGCGKT. The DEIH box motif lies at 352-355; that stretch reads DEIH. Residues 429–450 form a disordered region; that stretch reads SSDSGNYQGSSRGRRRESESKK. The region spanning 484 to 663 is the Helicase C-terminal domain; it reads QIDVDLVEAT…ELCLHIKSLQ (180 aa).

This sequence belongs to the DExH box helicase family.

The enzyme catalyses ATP + H2O = ADP + phosphate + H(+). This is DExH-box ATP-dependent RNA helicase DExH1 from Arabidopsis thaliana (Mouse-ear cress).